The sequence spans 306 residues: Ornithine carbamoyltransferase, anabolic (306 aa).

Residues 46-49 (STRT), Q73, R97, and 124-127 (HPTQ) each bind carbamoyl phosphate. Residues N156, D220, and 224 to 225 (SM) contribute to the L-ornithine site. Carbamoyl phosphate contacts are provided by residues 260-261 (CL) and R288.

This sequence belongs to the aspartate/ornithine carbamoyltransferase superfamily. OTCase family. Homohexamer; dimer of trimers.

It localises to the cytoplasm. It carries out the reaction carbamoyl phosphate + L-ornithine = L-citrulline + phosphate + H(+). Its pathway is amino-acid biosynthesis; L-arginine biosynthesis; L-arginine from L-ornithine and carbamoyl phosphate: step 1/3. In terms of biological role, reversibly catalyzes the transfer of the carbamoyl group from carbamoyl phosphate (CP) to the N(epsilon) atom of ornithine (ORN) to produce L-citrulline, which is a substrate for argininosuccinate synthetase (ArgG) involved in the final step in arginine biosynthesis. The chain is Ornithine carbamoyltransferase, anabolic from Campylobacter jejuni subsp. jejuni serotype O:2 (strain ATCC 700819 / NCTC 11168).